Here is a 529-residue protein sequence, read N- to C-terminus: CTP synthase (529 aa).

Residues 1–267 (MKEAKFIFVT…DTQILEHFHL (267 aa)) form an amidoligase domain region. Ser15 is a CTP binding site. UTP is bound at residue Ser15. ATP is bound by residues 16 to 21 (SLGKGL) and Asp73. Mg(2+)-binding residues include Asp73 and Glu141. CTP contacts are provided by residues 148 to 150 (DIE), 188 to 193 (KTKPTQ), and Lys224. UTP contacts are provided by residues 188-193 (KTKPTQ) and Lys224. The region spanning 292-529 (TVSIVGKYTE…SFVKAAIDKK (238 aa)) is the Glutamine amidotransferase type-1 domain. Gly354 contacts L-glutamine. The Nucleophile; for glutamine hydrolysis role is filled by Cys381. L-glutamine is bound by residues 382–385 (LGMQ), Glu405, and Arg459. Catalysis depends on residues His504 and Glu506.

The protein belongs to the CTP synthase family. In terms of assembly, homotetramer.

It catalyses the reaction UTP + L-glutamine + ATP + H2O = CTP + L-glutamate + ADP + phosphate + 2 H(+). The catalysed reaction is L-glutamine + H2O = L-glutamate + NH4(+). The enzyme catalyses UTP + NH4(+) + ATP = CTP + ADP + phosphate + 2 H(+). It functions in the pathway pyrimidine metabolism; CTP biosynthesis via de novo pathway; CTP from UDP: step 2/2. Its activity is regulated as follows. Allosterically activated by GTP, when glutamine is the substrate; GTP has no effect on the reaction when ammonia is the substrate. The allosteric effector GTP functions by stabilizing the protein conformation that binds the tetrahedral intermediate(s) formed during glutamine hydrolysis. Inhibited by the product CTP, via allosteric rather than competitive inhibition. Functionally, catalyzes the ATP-dependent amination of UTP to CTP with either L-glutamine or ammonia as the source of nitrogen. Regulates intracellular CTP levels through interactions with the four ribonucleotide triphosphates. This Wolbachia pipientis wMel protein is CTP synthase.